Consider the following 424-residue polypeptide: MSNYYYYYGGGRYDWLKTVEPTNFLKIGLPYQAHPLHLQHQATTTPPSILEKFKRADILLNEVKAEMDPLMLQPETEKKLYQILGSIDMFKGLRKKVEFTYNAQIVTNAWLKMYELLNTMNFNNTSQAFCNCELPGGFISAINHFNYTMMHYPTFNWVASSLYPSSETDALEDHYGLYQCNPDNWLMQSPLLKKNVDYNDGDVTIASNVKNLALRATQRLTPIHLYTADGGINVGHDYNKQEELNLKLHFGQALTGLLSLSKGGNMILKHYTLNHAFTLSLICVFSHFFEELYITKPTSSRPTNSETYIVGKNRLRLFTPKEEQILLKRLEFFNDTPLVDLSLYQNLLESIYFAVETIHLKQQIEFLNFGMKCYRHFYNKIKLLNEYLAPKKKIFQDRWRVLNKLYVLEKKHKLKLCAPQGSVA.

Residues glutamine 104–arginine 316 form the Adrift-type SAM-dependent 2'-O-MTase domain. Residues glycine 136 and aspartate 229 each coordinate S-adenosyl-L-methionine. Lysine 269 serves as the catalytic Proton acceptor.

The protein localises to the virion. The protein is Probable methyltransferase EP424R of African swine fever virus (strain Badajoz 1971 Vero-adapted) (Ba71V).